A 398-amino-acid polypeptide reads, in one-letter code: tRNA-specific 2-thiouridylase MnmA (398 aa).

Residues 18 to 25 (AMSGGVDS) and leucine 44 each bind ATP. Cysteine 112 functions as the Nucleophile in the catalytic mechanism. A disulfide bond links cysteine 112 and cysteine 213. Glycine 136 is a binding site for ATP. Positions 163–165 (RDQ) are interaction with tRNA. The active-site Cysteine persulfide intermediate is cysteine 213.

It belongs to the MnmA/TRMU family.

Its subcellular location is the cytoplasm. It catalyses the reaction S-sulfanyl-L-cysteinyl-[protein] + uridine(34) in tRNA + AH2 + ATP = 2-thiouridine(34) in tRNA + L-cysteinyl-[protein] + A + AMP + diphosphate + H(+). Functionally, catalyzes the 2-thiolation of uridine at the wobble position (U34) of tRNA, leading to the formation of s(2)U34. In Sinorhizobium fredii (strain NBRC 101917 / NGR234), this protein is tRNA-specific 2-thiouridylase MnmA.